The following is a 302-amino-acid chain: 1,2-dihydroxynaphthalene dioxygenase (302 aa).

VOC domains follow at residues Glu9–Gly124 and Gly149–Arg270. Residue His152 participates in Fe cation binding. Substrate contacts are provided by residues His152, Asp199–His200, His215, and Tyr256. His215 provides a ligand contact to Fe cation. Fe cation is bound at residue Glu266.

Belongs to the extradiol ring-cleavage dioxygenase family. The cofactor is Fe(2+).

It catalyses the reaction naphthalene-1,2-diol + O2 = 2-hydroxychromene-2-carboxylate + H(+). The protein operates within aromatic compound metabolism; naphthalene degradation. Inhibited by bathophenanthroline sulfonate, o-phenanthroline, 8-hydroxyquinoline, 2,2'-dipyridyl and p-chlormercuribenzoate. Also inhibited by Hg(2+), Cu(2+), Co(2+) and Fe(3+) ions. Functionally, involved in the naphthalene catabolic pathway. Catalyzes the meta-cleavage of 1,2-dihydroxynaphthalene (1,2-DHN) to yield 2-hydroxychromene-2-carboxylic acid. Can also cleave 3-methylcatechol and 4-methylcatechol. The sequence is that of 1,2-dihydroxynaphthalene dioxygenase (nahC) from Pseudomonas putida (Arthrobacter siderocapsulatus).